Reading from the N-terminus, the 197-residue chain is ATP-dependent Clp protease proteolytic subunit 1 (197 aa).

S96 (nucleophile) is an active-site residue. H121 is a catalytic residue.

The protein belongs to the peptidase S14 family. In terms of assembly, fourteen ClpP subunits assemble into 2 heptameric rings which stack back to back to give a disk-like structure with a central cavity, resembling the structure of eukaryotic proteasomes.

It is found in the cytoplasm. The catalysed reaction is Hydrolysis of proteins to small peptides in the presence of ATP and magnesium. alpha-casein is the usual test substrate. In the absence of ATP, only oligopeptides shorter than five residues are hydrolyzed (such as succinyl-Leu-Tyr-|-NHMec, and Leu-Tyr-Leu-|-Tyr-Trp, in which cleavage of the -Tyr-|-Leu- and -Tyr-|-Trp bonds also occurs).. Cleaves peptides in various proteins in a process that requires ATP hydrolysis. Has a chymotrypsin-like activity. Plays a major role in the degradation of misfolded proteins. This is ATP-dependent Clp protease proteolytic subunit 1 from Synechococcus sp. (strain CC9902).